Here is a 215-residue protein sequence, read N- to C-terminus: UPF0502 protein YceH (215 aa).

This sequence belongs to the UPF0502 family.

In Salmonella paratyphi A (strain ATCC 9150 / SARB42), this protein is UPF0502 protein YceH.